The following is a 750-amino-acid chain: Retron Eco8 OLD nuclease (750 aa).

The ATPase domain N-terminus stretch occupies residues 1-173 (MTIESIRVKN…IDLYDWNPIW (173 aa)). 33–37 (NVGKS) is a binding site for ATP. A dimerization domain region spans residues 174–260 (KLISNLNSFN…TQSDGTNSNK (87 aa)). Residues 261-390 (FLETLLHLLI…FSDNEARLFF (130 aa)) form an ATPase domain C-terminus region. A toprim domain region spans residues 391–704 (SEYIVFVEGA…SGWVTTFLNY (314 aa)). Residues E398, E402, D450, D452, S623, and E641 each contribute to the a divalent metal cation site.

The protein belongs to the class 1 OLD nuclease family. In terms of assembly, homodimer. A divalent metal cation serves as cofactor.

Functionally, probable nuclease member of antiviral defense system retron Eco8, composed of an reverse transcriptase (RT), this nuclease and a non-coding RNA (ncRNA) encoded between them. Expression of retron Eco8 confers protection against bacteriophages T4, T6, T7 and SECphi4, SECphi6 and SECphi18. At multiplicity of infection (MOI) of 0.02 cultures slow growth when infected with SECphi4 but do not collapse, at MOI 2 cultures collapse. When the retron is cloned in another E.coli strain synthesizes msDNA (a branched RNA linked by a 2',5'-phosphodiester bond to a single-stranded DNA). The retron transcript serves as primer and template to the reaction, and codes for the RT. The protein is Retron Eco8 OLD nuclease of Escherichia coli.